A 447-amino-acid chain; its full sequence is Ribosomal protein uS12 methylthiotransferase RimO (447 aa).

An MTTase N-terminal domain is found at 4-114; sequence PKVGFVSLGC…VMEAVHEYVP (111 aa). [4Fe-4S] cluster contacts are provided by Cys13, Cys49, Cys78, Cys147, Cys151, and Cys154. One can recognise a Radical SAM core domain in the interval 133 to 370; the sequence is LTPKHYAYLK…MQVQQQISAA (238 aa). The TRAM domain maps to 373–443; sequence QKRIGQTMTV…EYDLFAKLIK (71 aa).

The protein belongs to the methylthiotransferase family. RimO subfamily. [4Fe-4S] cluster is required as a cofactor.

Its subcellular location is the cytoplasm. The enzyme catalyses L-aspartate(89)-[ribosomal protein uS12]-hydrogen + (sulfur carrier)-SH + AH2 + 2 S-adenosyl-L-methionine = 3-methylsulfanyl-L-aspartate(89)-[ribosomal protein uS12]-hydrogen + (sulfur carrier)-H + 5'-deoxyadenosine + L-methionine + A + S-adenosyl-L-homocysteine + 2 H(+). In terms of biological role, catalyzes the methylthiolation of an aspartic acid residue of ribosomal protein uS12. The sequence is that of Ribosomal protein uS12 methylthiotransferase RimO from Acinetobacter baumannii (strain AB0057).